Consider the following 413-residue polypeptide: uncharacterized protein (413 aa).

The next 4 membrane-spanning stretches (helical) occupy residues 22–42 (VLLV…TLIL), 270–290 (IIYV…ISIC), 312–332 (ILIQ…GNLI), and 379–399 (LIII…YPIY).

It belongs to the ABC-4 integral membrane protein family. LolC/E subfamily.

The protein localises to the cell membrane. This is an uncharacterized protein from Buchnera aphidicola subsp. Schizaphis graminum (strain Sg).